The primary structure comprises 228 residues: Uracil-DNA glycosylase (228 aa).

Catalysis depends on D64, which acts as the Proton acceptor.

The protein belongs to the uracil-DNA glycosylase (UDG) superfamily. UNG family.

It is found in the cytoplasm. The enzyme catalyses Hydrolyzes single-stranded DNA or mismatched double-stranded DNA and polynucleotides, releasing free uracil.. Excises uracil residues from the DNA which can arise as a result of misincorporation of dUMP residues by DNA polymerase or due to deamination of cytosine. This is Uracil-DNA glycosylase from Yersinia enterocolitica serotype O:8 / biotype 1B (strain NCTC 13174 / 8081).